Consider the following 664-residue polypeptide: Methionine--tRNA ligase (664 aa).

A 'HIGH' region motif is present at residues Tyr15–His25. The short motif at Lys311–Ser315 is the 'KMSKS' region element. Lys314 is a binding site for ATP. Positions Met536–Arg556 are disordered. The region spanning Leu570–Arg662 is the tRNA-binding domain.

The protein belongs to the class-I aminoacyl-tRNA synthetase family. MetG type 2B subfamily. As to quaternary structure, homodimer.

It is found in the cytoplasm. The enzyme catalyses tRNA(Met) + L-methionine + ATP = L-methionyl-tRNA(Met) + AMP + diphosphate. Is required not only for elongation of protein synthesis but also for the initiation of all mRNA translation through initiator tRNA(fMet) aminoacylation. In Bacillus subtilis (strain 168), this protein is Methionine--tRNA ligase (metG).